We begin with the raw amino-acid sequence, 469 residues long: MATATLNFITFNQDHGCLAVGTSRGFRIYHTEPFSKIFSSEDGNVSIIEMLFSTSLVALILSPRHLIIQNTKRGSVICELTFPSAVLAVRLNRKRLAVVLEDEIYLYDIANMSLLFTIATSPNPSAICALSPSSENCFLAYPLPKPREDKDDKRPSHAPPLPTYIPPTSGDVLIFDAITLKAVNVIEAHRSPLSCIAINSEGTLLATASETGTIIRVFTVPKGQKLYQFRRGTYPSTIYSMSFNLSSTLLCVSSTSDTVHIFRLGGPNNGASGAAGAGSAGEVLAASPGQDITGSPRADRWSRSRSYDSGNESPGSGSEANDIAGSPSPRDRPTAANRRQSGSFSNILRRSSQIMGRSVAGVVGSYLPQTVTEMWEPARDFAFIKIPKSSAARQHNNPGATPSLPIAGEPLRSVVAMSSSSPQVMVVTSDGKFYVYNINMETGGEGYLVRQYSILENDDKHDSSSTYES.

WD repeat units follow at residues 188 to 228 (AHRS…KLYQ) and 233 to 272 (TYPSTIYSMSFNLSSTLLCVSSTSDTVHIFRLGGPNNGAS). The L/FRRG motif motif lies at 229-233 (FRRGT). A disordered region spans residues 285–348 (AASPGQDITG…RQSGSFSNIL (64 aa)). Basic and acidic residues predominate over residues 297 to 306 (RADRWSRSRS). Polar residues-rich tracts occupy residues 307-319 (YDSGNESPGSGSE) and 337-348 (NRRQSGSFSNIL).

It belongs to the WD repeat PROPPIN family. In terms of assembly, component of the PI(3,5)P2 regulatory complex.

It is found in the preautophagosomal structure membrane. The protein localises to the vacuole membrane. Its subcellular location is the endosome membrane. Functionally, the PI(3,5)P2 regulatory complex regulates both the synthesis and turnover of phosphatidylinositol 3,5-bisphosphate (PtdIns(3,5)P2). Necessary for proper vacuole morphology. Plays an important role in osmotically-induced vacuole fragmentation. Required for cytoplasm to vacuole transport (Cvt) vesicle formation, pexophagy and starvation-induced autophagy. Involved in correct ATG9 trafficking to the pre-autophagosomal structure. Might also be involved in premeiotic DNA replication. The chain is Autophagy-related protein 18 (ATG18) from Pyricularia oryzae (strain 70-15 / ATCC MYA-4617 / FGSC 8958) (Rice blast fungus).